The chain runs to 295 residues: Trehalose/maltose transport system permease protein MalF (295 aa).

7 helical membrane-spanning segments follow: residues 16–36, 79–99, 112–132, 146–166, 210–230, 236–256, and 267–287; these read LGYLMILPLLTVVLVFIILPV, VSFSFVSVSLETILGLSFALI, AIVLIPWAVPTIISARTWELM, ILGVSPVNWLGTPISAFFAIV, ITLPLLKPVLIVALILRTIDA, IIYVLTGGGPGGATTSISLLA, and IGSAISILTFVLVLSFTIVYL. The ABC transmembrane type-1 domain occupies 75–286; the sequence is TFVTVSFSFV…VLVLSFTIVY (212 aa).

This sequence belongs to the binding-protein-dependent transport system permease family. In terms of assembly, the complex is composed of two ATP-binding proteins (MalK), two transmembrane proteins (MalG and MalF) and a solute-binding protein (MalE).

It localises to the cell membrane. In terms of biological role, part of the ABC transporter complex MalEFGK involved in trehalose/maltose import. Responsible for the translocation of the substrate across the membrane. This is Trehalose/maltose transport system permease protein MalF (malF) from Thermococcus litoralis (strain ATCC 51850 / DSM 5473 / JCM 8560 / NS-C).